Here is a 486-residue protein sequence, read N- to C-terminus: Bifunctional protein GlmU (486 aa).

The pyrophosphorylase stretch occupies residues 1 to 236; the sequence is MTDQNLAIVV…SWLVDGINDR (236 aa). UDP-N-acetyl-alpha-D-glucosamine-binding positions include 11 to 14, lysine 25, glutamine 78, and 83 to 84; these read LAAG and GT. Residue aspartate 109 participates in Mg(2+) binding. UDP-N-acetyl-alpha-D-glucosamine-binding residues include glycine 146, glutamate 161, asparagine 176, and asparagine 234. Asparagine 234 is a binding site for Mg(2+). The interval 237–257 is linker; the sequence is AQLSEAAAKLNALTVRAWQLA. The segment at 258–486 is N-acetyltransferase; it reads GVTVQDPATT…ASNAAEESGE (229 aa). UDP-N-acetyl-alpha-D-glucosamine-binding residues include arginine 339 and lysine 357. The active-site Proton acceptor is the histidine 369. UDP-N-acetyl-alpha-D-glucosamine contacts are provided by tyrosine 372 and asparagine 383. Residues alanine 386, 392–393, and alanine 429 each bind acetyl-CoA; that span reads NY. The tract at residues 459–486 is disordered; the sequence is RRPGTDAARAAQRNGAAEASNAAEESGE. Over residues 465–486 the composition is skewed to low complexity; the sequence is AARAAQRNGAAEASNAAEESGE.

The protein in the N-terminal section; belongs to the N-acetylglucosamine-1-phosphate uridyltransferase family. It in the C-terminal section; belongs to the transferase hexapeptide repeat family. In terms of assembly, homotrimer. The cofactor is Mg(2+).

The protein resides in the cytoplasm. The catalysed reaction is alpha-D-glucosamine 1-phosphate + acetyl-CoA = N-acetyl-alpha-D-glucosamine 1-phosphate + CoA + H(+). It catalyses the reaction N-acetyl-alpha-D-glucosamine 1-phosphate + UTP + H(+) = UDP-N-acetyl-alpha-D-glucosamine + diphosphate. It participates in nucleotide-sugar biosynthesis; UDP-N-acetyl-alpha-D-glucosamine biosynthesis; N-acetyl-alpha-D-glucosamine 1-phosphate from alpha-D-glucosamine 6-phosphate (route II): step 2/2. Its pathway is nucleotide-sugar biosynthesis; UDP-N-acetyl-alpha-D-glucosamine biosynthesis; UDP-N-acetyl-alpha-D-glucosamine from N-acetyl-alpha-D-glucosamine 1-phosphate: step 1/1. The protein operates within bacterial outer membrane biogenesis; LPS lipid A biosynthesis. Functionally, catalyzes the last two sequential reactions in the de novo biosynthetic pathway for UDP-N-acetylglucosamine (UDP-GlcNAc). The C-terminal domain catalyzes the transfer of acetyl group from acetyl coenzyme A to glucosamine-1-phosphate (GlcN-1-P) to produce N-acetylglucosamine-1-phosphate (GlcNAc-1-P), which is converted into UDP-GlcNAc by the transfer of uridine 5-monophosphate (from uridine 5-triphosphate), a reaction catalyzed by the N-terminal domain. The protein is Bifunctional protein GlmU of Leifsonia xyli subsp. xyli (strain CTCB07).